We begin with the raw amino-acid sequence, 465 residues long: Chromosomal replication initiator protein DnaA (465 aa).

The domain I, interacts with DnaA modulators stretch occupies residues 1–84 (MSLSLWQQCL…RFEVGSKPLV (84 aa)). The interval 84 to 128 (VQAISQPAQPHHKQVSAAPQQQVRSAPVRPSWDNSPAQAEHTYRS) is domain II. The segment at 91–120 (AQPHHKQVSAAPQQQVRSAPVRPSWDNSPA) is disordered. A domain III, AAA+ region region spans residues 129 to 345 (NVNPKHTFDN…GALNRVIANA (217 aa)). Glycine 173, glycine 175, lysine 176, and threonine 177 together coordinate ATP. The interval 346-465 (NFTGRSITID…FSNLIRTLSS (120 aa)) is domain IV, binds dsDNA.

It belongs to the DnaA family. Oligomerizes as a right-handed, spiral filament on DNA at oriC.

The protein localises to the cytoplasm. Plays an essential role in the initiation and regulation of chromosomal replication. ATP-DnaA binds to the origin of replication (oriC) to initiate formation of the DNA replication initiation complex once per cell cycle. Binds the DnaA box (a 9 base pair repeat at the origin) and separates the double-stranded (ds)DNA. Forms a right-handed helical filament on oriC DNA; dsDNA binds to the exterior of the filament while single-stranded (ss)DNA is stabiized in the filament's interior. The ATP-DnaA-oriC complex binds and stabilizes one strand of the AT-rich DNA unwinding element (DUE), permitting loading of DNA polymerase. After initiation quickly degrades to an ADP-DnaA complex that is not apt for DNA replication. Binds acidic phospholipids. The chain is Chromosomal replication initiator protein DnaA from Pectobacterium carotovorum subsp. carotovorum (strain PC1).